The sequence spans 56 residues: UPF0391 membrane protein HCH_04387 (56 aa).

2 helical membrane-spanning segments follow: residues 6–26 (IVFF…IAAA) and 30–50 (IAQI…IAGG).

It belongs to the UPF0391 family.

The protein resides in the cell membrane. This is UPF0391 membrane protein HCH_04387 from Hahella chejuensis (strain KCTC 2396).